The chain runs to 274 residues: Large ribosomal subunit protein uL2 (274 aa).

Residues 223–274 (VAMNPVDHPHGGGEGRTSGGRHPVTPWGVPTKGYKTRSNKRTDKYIVRRRNK) form a disordered region.

It belongs to the universal ribosomal protein uL2 family. In terms of assembly, part of the 50S ribosomal subunit. Forms a bridge to the 30S subunit in the 70S ribosome.

Its function is as follows. One of the primary rRNA binding proteins. Required for association of the 30S and 50S subunits to form the 70S ribosome, for tRNA binding and peptide bond formation. It has been suggested to have peptidyltransferase activity; this is somewhat controversial. Makes several contacts with the 16S rRNA in the 70S ribosome. The sequence is that of Large ribosomal subunit protein uL2 from Shewanella putrefaciens (strain CN-32 / ATCC BAA-453).